We begin with the raw amino-acid sequence, 162 residues long: Putative 4-hydroxy-4-methyl-2-oxoglutarate aldolase (162 aa).

Substrate contacts are provided by residues 75–78 (GDML) and Arg97. Residue Asp98 coordinates a divalent metal cation.

This sequence belongs to the class II aldolase/RraA-like family. Homotrimer. Requires a divalent metal cation as cofactor.

The catalysed reaction is 4-hydroxy-4-methyl-2-oxoglutarate = 2 pyruvate. The enzyme catalyses oxaloacetate + H(+) = pyruvate + CO2. Its function is as follows. Catalyzes the aldol cleavage of 4-hydroxy-4-methyl-2-oxoglutarate (HMG) into 2 molecules of pyruvate. Also contains a secondary oxaloacetate (OAA) decarboxylase activity due to the common pyruvate enolate transition state formed following C-C bond cleavage in the retro-aldol and decarboxylation reactions. This is Putative 4-hydroxy-4-methyl-2-oxoglutarate aldolase from Stutzerimonas stutzeri (strain A1501) (Pseudomonas stutzeri).